A 139-amino-acid chain; its full sequence is uncharacterized protein (139 aa).

The interval 1–26 (MQLVREKRGAHQHVPRKTTEPQKVRG) is disordered. A compositionally biased stretch (basic and acidic residues) spans 17-26 (KTTEPQKVRG).

This is an uncharacterized protein from Ictalurid herpesvirus 1 (strain Auburn) (IcHV-1).